We begin with the raw amino-acid sequence, 265 residues long: Large ribosomal subunit protein bL9m (265 aa).

A mitochondrion-targeting transit peptide spans Met1–Ser49.

Belongs to the bacterial ribosomal protein bL9 family. In terms of assembly, component of the mitochondrial ribosome large subunit (39S) which comprises a 16S rRNA and about 50 distinct proteins.

The protein resides in the mitochondrion. The chain is Large ribosomal subunit protein bL9m (Mrpl9) from Mus musculus (Mouse).